The following is a 286-amino-acid chain: Thymidylate synthase (286 aa).

DUMP is bound by residues Arg-21 and 136 to 137 (RR). Catalysis depends on Cys-156, which acts as the Nucleophile. DUMP contacts are provided by residues 176–179 (RSVD), Asn-187, and 217–219 (HIY). Asp-179 contacts (6R)-5,10-methylene-5,6,7,8-tetrahydrofolate. Ala-285 provides a ligand contact to (6R)-5,10-methylene-5,6,7,8-tetrahydrofolate.

The protein belongs to the thymidylate synthase family. As to quaternary structure, homodimer.

The enzyme catalyses dUMP + (6R)-5,10-methylene-5,6,7,8-tetrahydrofolate = 7,8-dihydrofolate + dTMP. The protein operates within pyrimidine metabolism; dTTP biosynthesis. The protein is Thymidylate synthase (TD) of Enterobacteria phage T4 (Bacteriophage T4).